The primary structure comprises 193 residues: Putative zinc finger protein 726P1 (193 aa).

The C2H2-type 1; degenerate zinc-finger motif lies at tyrosine 18–histidine 40. The C2H2-type 2; atypical zinc-finger motif lies at tyrosine 46 to cysteine 68. The segment at tyrosine 74–histidine 96 adopts a C2H2-type 3; degenerate zinc-finger fold. The C2H2-type 4 zinc finger occupies tyrosine 102–histidine 124. Residues tyrosine 130–histidine 152 form a C2H2-type 5; degenerate zinc finger. The C2H2-type 6 zinc-finger motif lies at tyrosine 158 to histidine 180.

This is Putative zinc finger protein 726P1 (ZNF726P1) from Homo sapiens (Human).